A 392-amino-acid chain; its full sequence is HORMA domain-containing protein 1 (392 aa).

One can recognise an HORMA domain in the interval Gln25–Val227. 2 disordered regions span residues Ile271 to Leu292 and Leu371 to Thr392. The residue at position 374 (Ser374) is a Phosphoserine. Positions Lys381–Arg384 match the Nuclear localization signal motif.

In terms of assembly, interacts with HORMAD2. Interacts with IHO1. In terms of processing, phosphorylated at Ser-375 in a SPO11-dependent manner.

The protein localises to the nucleus. It is found in the chromosome. Plays a key role in meiotic progression. Regulates 3 different functions during meiosis: ensures that sufficient numbers of processed DNA double-strand breaks (DSBs) are available for successful homology search by increasing the steady-state numbers of single-stranded DSB ends. Promotes synaptonemal-complex formation independently of its role in homology search. Plays a key role in the male mid-pachytene checkpoint and the female meiotic prophase checkpoint: required for efficient build-up of ATR activity on unsynapsed chromosome regions, a process believed to form the basis of meiotic silencing of unsynapsed chromatin (MSUC) and meiotic prophase quality control in both sexes. The sequence is that of HORMA domain-containing protein 1 (Hormad1) from Rattus norvegicus (Rat).